The following is a 229-amino-acid chain: NAD(P)H-hydrate epimerase (229 aa).

The YjeF N-terminal domain occupies Ala-10–Leu-217. Asn-60–Asp-64 is a binding site for (6S)-NADPHX. 2 residues coordinate K(+): Asn-61 and Asp-125. (6S)-NADPHX is bound by residues Gly-129–Pro-135 and Asp-158. Ser-161 contacts K(+).

This sequence belongs to the NnrE/AIBP family. K(+) serves as cofactor.

The enzyme catalyses (6R)-NADHX = (6S)-NADHX. It catalyses the reaction (6R)-NADPHX = (6S)-NADPHX. Catalyzes the epimerization of the S- and R-forms of NAD(P)HX, a damaged form of NAD(P)H that is a result of enzymatic or heat-dependent hydration. This is a prerequisite for the S-specific NAD(P)H-hydrate dehydratase to allow the repair of both epimers of NAD(P)HX. In Drosophila virilis (Fruit fly), this protein is NAD(P)H-hydrate epimerase.